The sequence spans 203 residues: ATP-dependent Clp protease proteolytic subunit 2 (203 aa).

S97 functions as the Nucleophile in the catalytic mechanism. The active site involves H122.

Belongs to the peptidase S14 family. Fourteen ClpP subunits assemble into 2 heptameric rings which stack back to back to give a disk-like structure with a central cavity, resembling the structure of eukaryotic proteasomes.

It is found in the cytoplasm. It catalyses the reaction Hydrolysis of proteins to small peptides in the presence of ATP and magnesium. alpha-casein is the usual test substrate. In the absence of ATP, only oligopeptides shorter than five residues are hydrolyzed (such as succinyl-Leu-Tyr-|-NHMec, and Leu-Tyr-Leu-|-Tyr-Trp, in which cleavage of the -Tyr-|-Leu- and -Tyr-|-Trp bonds also occurs).. In terms of biological role, cleaves peptides in various proteins in a process that requires ATP hydrolysis. Has a chymotrypsin-like activity. Plays a major role in the degradation of misfolded proteins. This is ATP-dependent Clp protease proteolytic subunit 2 from Myxococcus xanthus (strain DK1622).